The primary structure comprises 635 residues: 1-deoxy-D-xylulose-5-phosphate synthase (635 aa).

Thiamine diphosphate is bound by residues H73 and 114–116 (SHA). D146 is a Mg(2+) binding site. Thiamine diphosphate contacts are provided by residues 147–148 (GA), N176, Y287, and E368. N176 lines the Mg(2+) pocket.

Belongs to the transketolase family. DXPS subfamily. As to quaternary structure, homodimer. Mg(2+) is required as a cofactor. Requires thiamine diphosphate as cofactor.

It catalyses the reaction D-glyceraldehyde 3-phosphate + pyruvate + H(+) = 1-deoxy-D-xylulose 5-phosphate + CO2. It participates in metabolic intermediate biosynthesis; 1-deoxy-D-xylulose 5-phosphate biosynthesis; 1-deoxy-D-xylulose 5-phosphate from D-glyceraldehyde 3-phosphate and pyruvate: step 1/1. Functionally, catalyzes the acyloin condensation reaction between C atoms 2 and 3 of pyruvate and glyceraldehyde 3-phosphate to yield 1-deoxy-D-xylulose-5-phosphate (DXP). This chain is 1-deoxy-D-xylulose-5-phosphate synthase, found in Corynebacterium diphtheriae (strain ATCC 700971 / NCTC 13129 / Biotype gravis).